The primary structure comprises 469 residues: Adenosylhomocysteinase (469 aa).

3 residues coordinate substrate: threonine 63, aspartate 139, and glutamate 164. Residue 165–167 (TTT) coordinates NAD(+). 2 residues coordinate substrate: lysine 194 and aspartate 198. Residues asparagine 199, 228-233 (GYGDVG), glutamate 251, asparagine 300, 321-323 (IGH), and asparagine 375 contribute to the NAD(+) site.

This sequence belongs to the adenosylhomocysteinase family. NAD(+) serves as cofactor.

The protein resides in the cytoplasm. It catalyses the reaction S-adenosyl-L-homocysteine + H2O = L-homocysteine + adenosine. The protein operates within amino-acid biosynthesis; L-homocysteine biosynthesis; L-homocysteine from S-adenosyl-L-homocysteine: step 1/1. Its function is as follows. May play a key role in the regulation of the intracellular concentration of adenosylhomocysteine. In Pseudomonas syringae pv. tomato (strain ATCC BAA-871 / DC3000), this protein is Adenosylhomocysteinase.